The primary structure comprises 158 residues: Inorganic pyrophosphatase (158 aa).

Glu-8 lines the Mg(2+) pocket. Residues Lys-16, Arg-30, and Tyr-42 each contribute to the substrate site. Residues Asp-52, Asp-57, Asp-84, and Asp-89 each coordinate Mg(2+). Asp-89 acts as the Proton acceptor in catalysis. Tyr-125 lines the substrate pocket.

This sequence belongs to the PPase family. As to quaternary structure, homohexamer. It depends on Mg(2+) as a cofactor.

The protein localises to the cytoplasm. The catalysed reaction is diphosphate + H2O = 2 phosphate + H(+). Its function is as follows. Catalyzes the hydrolysis of inorganic pyrophosphate (PPi) forming two phosphate ions. The polypeptide is Inorganic pyrophosphatase (Corynebacterium efficiens (strain DSM 44549 / YS-314 / AJ 12310 / JCM 11189 / NBRC 100395)).